Consider the following 89-residue polypeptide: Small ribosomal subunit protein uS17 (89 aa).

This sequence belongs to the universal ribosomal protein uS17 family. In terms of assembly, part of the 30S ribosomal subunit.

Functionally, one of the primary rRNA binding proteins, it binds specifically to the 5'-end of 16S ribosomal RNA. The protein is Small ribosomal subunit protein uS17 of Syntrophomonas wolfei subsp. wolfei (strain DSM 2245B / Goettingen).